The following is a 360-amino-acid chain: Arginase, non-hepatic 3 (360 aa).

His-122, Asp-145, His-147, and Asp-149 together coordinate Mn(2+). Substrate-binding positions include 147 to 151, 158 to 160, and Asp-204; these read HADIN and SGN. Mn(2+) contacts are provided by Asp-253 and Asp-255. Thr-267 and Glu-298 together coordinate substrate.

It belongs to the arginase family. In terms of assembly, homotrimer. It depends on Mn(2+) as a cofactor. Expressed at differing tadpole stages in tail, intestine, hindlimb and trunk region. Strongest in tadpole tail.

It carries out the reaction L-arginine + H2O = urea + L-ornithine. Its pathway is nitrogen metabolism; urea cycle; L-ornithine and urea from L-arginine: step 1/1. Functionally, as well as its role in the urea cycle, may be involved in tissue remodeling. The polypeptide is Arginase, non-hepatic 3 (arg2-c) (Xenopus laevis (African clawed frog)).